Reading from the N-terminus, the 222-residue chain is Gamma-glutamylcyclotransferase and putative RNase MJ0434 (222 aa).

The active site involves Arg-75. The RX(4)HXY motif motif lies at 75–82 (RDILIRKY). Residue Tyr-82 is modified to O-di-AMP-tyrosine.

In the N-terminal section; belongs to the HepT RNase toxin family. It in the C-terminal section; belongs to the gamma-glutamylcyclotransferase family. In terms of assembly, homodimer, probably forms a complex with cognate antitoxin MJ0435. In terms of processing, modified by cognate antitoxin MJ0435; probably at least 2 successive AMPylation events occur on Tyr-82.

Probable toxic component of a putative type VII toxin-antitoxin (TA) system, probably an RNase. Probably neutralized by cognate antitoxin MJ0435. Neutralization may be due to AMPylation by MJ0435. The polypeptide is Gamma-glutamylcyclotransferase and putative RNase MJ0434 (Methanocaldococcus jannaschii (strain ATCC 43067 / DSM 2661 / JAL-1 / JCM 10045 / NBRC 100440) (Methanococcus jannaschii)).